The sequence spans 226 residues: Probable GPI-anchored adhesin-like protein PGA28 (226 aa).

The signal sequence occupies residues 1-26 (MKFFAYFAVIALSSASLINLFKRATA). A disordered region spans residues 119–209 (DTEATTGSDT…SQQTSSHAGG (91 aa)). The span at 131-148 (KAATGATTSAGTGVTKTS) shows a compositional bias: low complexity. A compositionally biased stretch (polar residues) spans 149-160 (ETGGVSSTANSE). The segment covering 161-208 (AKSGSVTTSKSGSTSISESKTTSGSSSSGKSSSSTSSASSQQTSSHAG) has biased composition (low complexity). Serine 197 carries the GPI-anchor amidated serine lipid modification. Residues 198–226 (ASSQQTSSHAGGASGAFVSLLGLFAALLI) constitute a propeptide, removed in mature form.

Post-translationally, predicted to be a cleavage substrate for KEX2.

It is found in the cell membrane. Its function is as follows. Putative adhesin which is involved in cell adhesion and virulence. Plays a role in Candida-bacterial interactions and subsequent regulation of filamentation. The chain is Probable GPI-anchored adhesin-like protein PGA28 (PGA28) from Candida albicans (strain SC5314 / ATCC MYA-2876) (Yeast).